Here is a 694-residue protein sequence, read N- to C-terminus: Long-chain-fatty-acid--CoA ligase 3 (694 aa).

The tract at residues 1-25 (MSEQHSVAVGKAANEHETAPRRNVR) is disordered. At Ser-2 the chain carries N-acetylserine. 269–280 (YTSGSISAPKGV) lines the ATP pocket. The short motif at 527 to 576 (DGWFRTGDIVEWTPKGQLKIIDRRKNLVKTLNGEYIALEKLESVYRSNSY) is the FACS element.

Belongs to the ATP-dependent AMP-binding enzyme family. In terms of assembly, interacts with FRK1. The cofactor is Mg(2+).

It is found in the cell membrane. The enzyme catalyses a long-chain fatty acid + ATP + CoA = a long-chain fatty acyl-CoA + AMP + diphosphate. The catalysed reaction is (9Z)-octadecenoate + ATP + CoA = (9Z)-octadecenoyl-CoA + AMP + diphosphate. It carries out the reaction hexadecanoate + ATP + CoA = hexadecanoyl-CoA + AMP + diphosphate. It catalyses the reaction (9Z)-hexadecenoate + ATP + CoA = (9Z)-hexadecenoyl-CoA + AMP + diphosphate. The enzyme catalyses (9Z)-tetradecenoate + ATP + CoA = (9Z)-tetradecenoyl-CoA + AMP + diphosphate. The catalysed reaction is (9Z,12Z)-octadecadienoate + ATP + CoA = (9Z,12Z)-octadecadienoyl-CoA + AMP + diphosphate. Activates endogenous long-chain fatty acids (LCFA) by esterification of the fatty acids into metabolically active CoA-thioesters for subsequent degradation or incorporation into phospholipids. Acts preferentially on C16 and C18 fatty acids with a cis-double bond at C-9-C-10. This Saccharomyces cerevisiae (strain ATCC 204508 / S288c) (Baker's yeast) protein is Long-chain-fatty-acid--CoA ligase 3 (FAA3).